Consider the following 161-residue polypeptide: Allophycocyanin beta chain (161 aa).

N71 carries the N4-methylasparagine modification. C81 is a binding site for (2R,3E)-phycocyanobilin.

This sequence belongs to the phycobiliprotein family. As to quaternary structure, heterodimer of an alpha and a beta chain. In terms of processing, contains one covalently linked phycocyanobilin chromophore.

Its subcellular location is the plastid. The protein localises to the chloroplast thylakoid membrane. In terms of biological role, light-harvesting photosynthetic bile pigment-protein from the phycobiliprotein complex. Allophycocyanin has a maximum absorption at approximately 650 nanometers. This Aglaothamnion neglectum (Red alga) protein is Allophycocyanin beta chain (apcB).